We begin with the raw amino-acid sequence, 415 residues long: Gamma-glutamyl phosphate reductase (415 aa).

Belongs to the gamma-glutamyl phosphate reductase family.

The protein localises to the cytoplasm. It catalyses the reaction L-glutamate 5-semialdehyde + phosphate + NADP(+) = L-glutamyl 5-phosphate + NADPH + H(+). It functions in the pathway amino-acid biosynthesis; L-proline biosynthesis; L-glutamate 5-semialdehyde from L-glutamate: step 2/2. In terms of biological role, catalyzes the NADPH-dependent reduction of L-glutamate 5-phosphate into L-glutamate 5-semialdehyde and phosphate. The product spontaneously undergoes cyclization to form 1-pyrroline-5-carboxylate. In Psychromonas ingrahamii (strain DSM 17664 / CCUG 51855 / 37), this protein is Gamma-glutamyl phosphate reductase.